The sequence spans 116 residues: Signal recognition particle 14 kDa protein (116 aa).

The protein belongs to the SRP14 family. In terms of assembly, heterodimer with ZK512.4/SRP9; binds RNA as heterodimer. Component of a signal recognition particle (SRP) complex that consists of a 7SL RNA molecule of 300 nucleotides and six protein subunits: srpa-72, srpa-68, SRP54, F37F2.2/SRP19, F25G6.8/SRP14 and ZK512.4/SRP9.

The protein resides in the cytoplasm. Functionally, component of the signal recognition particle (SRP) complex, a ribonucleoprotein complex that mediates the cotranslational targeting of secretory and membrane proteins to the endoplasmic reticulum (ER). F37F2.2/srpa-19 together with F25G6.8/srpa-14 and the Alu portion of the SRP RNA, constitutes the elongation arrest domain of SRP. The complex of F37F2.2/srpa-19 and F25G6.8/srpa-14 is required for SRP RNA binding. The sequence is that of Signal recognition particle 14 kDa protein from Caenorhabditis elegans.